A 25-amino-acid polypeptide reads, in one-letter code: RGSNLTSLPLQNVIDLFYVGNITIG.

2 N-linked (GlcNAc...) asparagine glycosylation sites follow: Asn4 and Asn21.

Belongs to the peptidase A1 family. Post-translationally, N-glycosylated. In terms of tissue distribution, expressed in chorionic epithelium (trophectoderm).

The protein localises to the secreted. The protein resides in the extracellular space. This is Pregnancy-associated glycoprotein 72 from Bison bison (American bison).